An 816-amino-acid chain; its full sequence is Chitin synthase 1 (816 aa).

The interval 1 to 21 (MLSQGEILRNPSRTRLQRPPK) is disordered. At 1 to 32 (MLSQGEILRNPSRTRLQRPPKSRSERKGWWYR) the chain is on the cytoplasmic side. Residues 33 to 53 (VTIFLTCLIPNFMLRCFGMTT) traverse the membrane as a helical segment. Residues 54-63 (PEVQHAWREK) are Extracellular-facing. A helical transmembrane segment spans residues 64–84 (VALCICIFFCWIILGFTTYGM). Topologically, residues 85-240 (NTIICKGSNQ…TPGCLLADTM (156 aa)) are cytoplasmic. A helical transmembrane segment spans residues 241 to 261 (FWITTISIFGLIITKFLLGFF). The Extracellular portion of the chain corresponds to 262-697 (YSWYAKRRPK…QLVVVMELFG (436 aa)). N-linked (GlcNAc...) asparagine glycans are attached at residues N319 and N664. A helical transmembrane segment spans residues 698–718 (TLVLPAAIIFTFVMIAVSILI). Residues 719-720 (EP) lie on the Cytoplasmic side of the membrane. Residues 721-741 (AWVPLIMLVGIFGLPAVLILI) traverse the membrane as a helical segment. The Extracellular segment spans residues 742-745 (TTME). Residues 746–766 (IQYVFWCLVYILSIPIWNFVL) form a helical membrane-spanning segment. Residues 767-816 (PTYAFWHFDNFSWGDTRKVDGEGKEDEEGEFDHTKIRIRELEEFLSEANK) are Cytoplasmic-facing.

The protein belongs to the chitin synthase family. Class IV subfamily.

It localises to the cell membrane. The enzyme catalyses [(1-&gt;4)-N-acetyl-beta-D-glucosaminyl](n) + UDP-N-acetyl-alpha-D-glucosamine = [(1-&gt;4)-N-acetyl-beta-D-glucosaminyl](n+1) + UDP + H(+). Its function is as follows. Polymerizes chitin, a structural polymer of the cell wall and septum, by transferring the sugar moiety of UDP-GlcNAc to the non-reducing end of the growing chitin polymer. The protein is Chitin synthase 1 (CHS1) of Encephalitozoon cuniculi (strain GB-M1) (Microsporidian parasite).